Consider the following 930-residue polypeptide: Probable outer membrane protein pmp8 (930 aa).

The first 26 residues, 1–26, serve as a signal peptide directing secretion; that stretch reads MKIPLHKLLISSTLVTPILLSIATYG. An Autotransporter domain is found at 636–930; the sequence is SIYQQRGLWA…NVDCGLRYSF (295 aa).

The protein belongs to the PMP outer membrane protein family.

The protein localises to the secreted. It is found in the cell wall. The protein resides in the cell outer membrane. This is Probable outer membrane protein pmp8 (pmp8) from Chlamydia pneumoniae (Chlamydophila pneumoniae).